The following is a 249-amino-acid chain: Small ribosomal subunit protein eS6 (249 aa).

Over residues 223–238 (LRQRDHSKKHTQKVHA) the composition is skewed to basic residues. Residues 223 to 249 (LRQRDHSKKHTQKVHAQRAEVAAFQKK) form a disordered region.

The protein belongs to the eukaryotic ribosomal protein eS6 family. In terms of assembly, component of the small ribosomal subunit. Part of the small subunit (SSU) processome, composed of more than 70 proteins and the RNA chaperone small nucleolar RNA (snoRNA) U3. Ribosomal protein S6 is the major substrate of protein kinases in eukaryote ribosomes.

It is found in the cytoplasm. It localises to the nucleus. The protein resides in the nucleolus. Component of the 40S small ribosomal subunit. Plays an important role in controlling cell growth and proliferation through the selective translation of particular classes of mRNA. Part of the small subunit (SSU) processome, first precursor of the small eukaryotic ribosomal subunit. During the assembly of the SSU processome in the nucleolus, many ribosome biogenesis factors, an RNA chaperone and ribosomal proteins associate with the nascent pre-rRNA and work in concert to generate RNA folding, modifications, rearrangements and cleavage as well as targeted degradation of pre-ribosomal RNA by the RNA exosome. This Leishmania infantum protein is Small ribosomal subunit protein eS6 (RPS6).